The primary structure comprises 171 residues: CDP-archaeol synthase (171 aa).

4 consecutive transmembrane segments (helical) span residues 11-31, 65-85, 129-149, and 151-171; these read VLYV…GLVF, VGLV…IGVI, LILV…IMLI, and LVLH…DVWY.

Belongs to the CDP-archaeol synthase family. It depends on Mg(2+) as a cofactor.

The protein localises to the cell membrane. It catalyses the reaction 2,3-bis-O-(geranylgeranyl)-sn-glycerol 1-phosphate + CTP + H(+) = CDP-2,3-bis-O-(geranylgeranyl)-sn-glycerol + diphosphate. It participates in membrane lipid metabolism; glycerophospholipid metabolism. Catalyzes the formation of CDP-2,3-bis-(O-geranylgeranyl)-sn-glycerol (CDP-archaeol) from 2,3-bis-(O-geranylgeranyl)-sn-glycerol 1-phosphate (DGGGP) and CTP. This reaction is the third ether-bond-formation step in the biosynthesis of archaeal membrane lipids. The chain is CDP-archaeol synthase from Methanothermobacter thermautotrophicus (strain ATCC 29096 / DSM 1053 / JCM 10044 / NBRC 100330 / Delta H) (Methanobacterium thermoautotrophicum).